Consider the following 455-residue polypeptide: Bifunctional protein GlmU (455 aa).

Positions 1 to 232 (MASITGALIL…DPNLLGVNDP (232 aa)) are pyrophosphorylase. UDP-N-acetyl-alpha-D-glucosamine is bound by residues 10 to 13 (LAAG), Lys24, Gln75, and 80 to 81 (GT). A Mg(2+)-binding site is contributed by Asp106. The UDP-N-acetyl-alpha-D-glucosamine site is built by Gly141, Glu155, Asn172, and Asn230. Position 230 (Asn230) interacts with Mg(2+). A linker region spans residues 233-253 (AELIRSEALVRARIALNWIEK). Residues 254–455 (RVLIHAPETV…QTTLPRRRNS (202 aa)) form an N-acetyltransferase region. UDP-N-acetyl-alpha-D-glucosamine contacts are provided by Arg336 and Lys354. The active-site Proton acceptor is His366. Tyr369 and Asn380 together coordinate UDP-N-acetyl-alpha-D-glucosamine. Acetyl-CoA is bound by residues Ala383, 389–390 (NY), Ser408, Ala426, and Arg443.

In the N-terminal section; belongs to the N-acetylglucosamine-1-phosphate uridyltransferase family. The protein in the C-terminal section; belongs to the transferase hexapeptide repeat family. In terms of assembly, homotrimer. The cofactor is Mg(2+).

The protein localises to the cytoplasm. It carries out the reaction alpha-D-glucosamine 1-phosphate + acetyl-CoA = N-acetyl-alpha-D-glucosamine 1-phosphate + CoA + H(+). It catalyses the reaction N-acetyl-alpha-D-glucosamine 1-phosphate + UTP + H(+) = UDP-N-acetyl-alpha-D-glucosamine + diphosphate. Its pathway is nucleotide-sugar biosynthesis; UDP-N-acetyl-alpha-D-glucosamine biosynthesis; N-acetyl-alpha-D-glucosamine 1-phosphate from alpha-D-glucosamine 6-phosphate (route II): step 2/2. The protein operates within nucleotide-sugar biosynthesis; UDP-N-acetyl-alpha-D-glucosamine biosynthesis; UDP-N-acetyl-alpha-D-glucosamine from N-acetyl-alpha-D-glucosamine 1-phosphate: step 1/1. It functions in the pathway bacterial outer membrane biogenesis; LPS lipid A biosynthesis. Catalyzes the last two sequential reactions in the de novo biosynthetic pathway for UDP-N-acetylglucosamine (UDP-GlcNAc). The C-terminal domain catalyzes the transfer of acetyl group from acetyl coenzyme A to glucosamine-1-phosphate (GlcN-1-P) to produce N-acetylglucosamine-1-phosphate (GlcNAc-1-P), which is converted into UDP-GlcNAc by the transfer of uridine 5-monophosphate (from uridine 5-triphosphate), a reaction catalyzed by the N-terminal domain. The protein is Bifunctional protein GlmU of Nitratidesulfovibrio vulgaris (strain DSM 19637 / Miyazaki F) (Desulfovibrio vulgaris).